Consider the following 397-residue polypeptide: Sexual differentiation process protein isp7 (397 aa).

The 99-residue stretch at 255–353 folds into the Fe2OG dioxygenase domain; the sequence is PTTSIRLLRY…RYTIPFFLQG (99 aa).

This sequence belongs to the iron/ascorbate-dependent oxidoreductase family.

The sequence is that of Sexual differentiation process protein isp7 (isp7) from Schizosaccharomyces pombe (strain 972 / ATCC 24843) (Fission yeast).